We begin with the raw amino-acid sequence, 84 residues long: Small ribosomal subunit protein bS20 (84 aa).

The tract at residues 1–25 (MANIVSNEKTYRHTQKVRKENHAKM) is disordered.

Belongs to the bacterial ribosomal protein bS20 family.

In terms of biological role, binds directly to 16S ribosomal RNA. This is Small ribosomal subunit protein bS20 from Ureaplasma parvum serovar 3 (strain ATCC 700970).